Reading from the N-terminus, the 563-residue chain is Glutamate--tRNA ligase (563 aa).

The disordered stretch occupies residues 61-94; it reads PEEQQKEVESLGGLEQHTKKEEKPKGLPELKNTE. A compositionally biased stretch (basic and acidic residues) spans 76-94; that stretch reads QHTKKEEKPKGLPELKNTE. A 'HIGH' region motif is present at residues 104 to 114; that stretch reads PNPSGPLHIGH.

Belongs to the class-I aminoacyl-tRNA synthetase family. Glutamate--tRNA ligase type 2 subfamily.

It is found in the cytoplasm. It carries out the reaction tRNA(Glu) + L-glutamate + ATP = L-glutamyl-tRNA(Glu) + AMP + diphosphate. Its function is as follows. Catalyzes the attachment of glutamate to tRNA(Glu) in a two-step reaction: glutamate is first activated by ATP to form Glu-AMP and then transferred to the acceptor end of tRNA(Glu). The chain is Glutamate--tRNA ligase from Methanosphaera stadtmanae (strain ATCC 43021 / DSM 3091 / JCM 11832 / MCB-3).